Consider the following 239-residue polypeptide: Phosphoribosylaminoimidazole-succinocarboxamide synthase (239 aa).

It belongs to the SAICAR synthetase family.

It carries out the reaction 5-amino-1-(5-phospho-D-ribosyl)imidazole-4-carboxylate + L-aspartate + ATP = (2S)-2-[5-amino-1-(5-phospho-beta-D-ribosyl)imidazole-4-carboxamido]succinate + ADP + phosphate + 2 H(+). Its pathway is purine metabolism; IMP biosynthesis via de novo pathway; 5-amino-1-(5-phospho-D-ribosyl)imidazole-4-carboxamide from 5-amino-1-(5-phospho-D-ribosyl)imidazole-4-carboxylate: step 1/2. This Bacillus cereus (strain G9842) protein is Phosphoribosylaminoimidazole-succinocarboxamide synthase.